Here is an 881-residue protein sequence, read N- to C-terminus: Translation initiation factor IF-2 (881 aa).

2 disordered regions span residues 53–92 and 163–292; these read RSHG…SKTT and AEAE…FERP. Polar residues predominate over residues 81 to 92; sequence EVTVNSGRSKTT. A compositionally biased stretch (low complexity) spans 172-186; the sequence is EAAAAAKAAEALAAA. Basic and acidic residues predominate over residues 219 to 236; the sequence is RNDDRNNRSAPRNERGPG. The span at 254 to 263 shows a compositional bias: low complexity; it reads GNSNNSNTRG. Residues 380–549 form the tr-type G domain; the sequence is QRPPVVTIMG…SIQAELLELK (170 aa). The interval 389–396 is G1; that stretch reads GHVDHGKT. Residue 389–396 coordinates GTP; that stretch reads GHVDHGKT. Residues 414–418 are G2; the sequence is GITQH. The interval 435-438 is G3; sequence DTPG. GTP is bound by residues 435 to 439 and 489 to 492; these read DTPGH and NKID. Residues 489–492 form a G4 region; that stretch reads NKID. The segment at 525 to 527 is G5; the sequence is SAK.

The protein belongs to the TRAFAC class translation factor GTPase superfamily. Classic translation factor GTPase family. IF-2 subfamily.

Its subcellular location is the cytoplasm. In terms of biological role, one of the essential components for the initiation of protein synthesis. Protects formylmethionyl-tRNA from spontaneous hydrolysis and promotes its binding to the 30S ribosomal subunits. Also involved in the hydrolysis of GTP during the formation of the 70S ribosomal complex. The sequence is that of Translation initiation factor IF-2 from Stenotrophomonas maltophilia (strain K279a).